Reading from the N-terminus, the 352-residue chain is Aromatic amino acid aminotransferase (352 aa).

An N6-(pyridoxal phosphate)lysine modification is found at Lys-217.

It belongs to the class-II pyridoxal-phosphate-dependent aminotransferase family. In terms of assembly, homodimer. Pyridoxal 5'-phosphate serves as cofactor.

It carries out the reaction an aromatic L-alpha-amino acid + 2-oxoglutarate = an aromatic oxo-acid + L-glutamate. Aminotransferase that catalyzes the conversion of aromatic amino acids and 2-oxoglutarate into corresponding aromatic oxo acids and L-glutamate. The chain is Aromatic amino acid aminotransferase from Cutibacterium acnes (strain DSM 16379 / KPA171202) (Propionibacterium acnes).